The primary structure comprises 171 residues: MLRAGGRRLLAPGLRRVLGGGAAAPVAVGGAKAYHERVVDHYENPRNVGSFENDDPSVGTGLVGAPACGDVMKLQIRVDESSGKIVDACFKTFGCGSAIASSSVATEWVKGKQMEEVVTIKNTEIAKHLSLPPVKLHCSMLAEDAIKAAVKDYEAKKAKLAQKGEEKAAEA.

The N-terminal 55 residues, 1–55, are a transit peptide targeting the mitochondrion; that stretch reads MLRAGGRRLLAPGLRRVLGGGAAAPVAVGGAKAYHERVVDHYENPRNVGSFENDD.

Belongs to the NifU family. Component of the core Fe-S cluster (ISC) assembly machinery. Requires [2Fe-2S] cluster as cofactor.

It is found in the mitochondrion matrix. It functions in the pathway cofactor biosynthesis; iron-sulfur cluster biosynthesis. In terms of biological role, scaffold protein for the de novo synthesis of iron-sulfur (Fe-S) clusters within mitochondria, which is required for maturation of both mitochondrial and cytoplasmic [2Fe-2S] and [4Fe-4S] proteins. First, a [2Fe-2S] cluster is transiently assembled on the scaffold protein ISCU (ISU1, ISU2 or ISU3). In a second step, the cluster is released from ISCU, transferred to a glutaredoxin, followed by the formation of mitochondrial [2Fe-2S] proteins, the synthesis of [4Fe-4S] clusters and their target-specific insertion into the recipient apoproteins. Cluster assembly on ISCU depends on the function of the cysteine desulfurase complex NFS1-ISD11, which serves as the sulfur donor for cluster synthesis, the iron-binding protein frataxin as the putative iron donor, and the electron transfer chain comprised of ferredoxin reductase and ferredoxin, which receive their electrons from NADH. The chain is Iron-sulfur cluster assembly protein 1 from Oryza sativa subsp. japonica (Rice).